A 154-amino-acid polypeptide reads, in one-letter code: Prefoldin subunit 2 (154 aa).

Basic and acidic residues predominate over residues 124 to 139 (IRLMGEDEKPAAKENS). The disordered stretch occupies residues 124 to 154 (IRLMGEDEKPAAKENSEGAGAKASSAGVLVS). Residues 140–154 (EGAGAKASSAGVLVS) are compositionally biased toward low complexity.

The protein belongs to the prefoldin subunit beta family. Heterohexamer of two PFD-alpha type and four PFD-beta type subunits. Component of the PAQosome complex which is responsible for the biogenesis of several protein complexes and which consists of R2TP complex members RUVBL1, RUVBL2, RPAP3 and PIH1D1, URI complex members PFDN2, PFDN6, PDRG1, UXT and URI1 as well as ASDURF, POLR2E and DNAAF10/WDR92. Interacts with URI1; the interaction is phosphorylation-dependent and occurs in a growth-dependent manner.

It is found in the nucleus. It localises to the cytoplasm. The protein localises to the mitochondrion. Functionally, binds specifically to cytosolic chaperonin (c-CPN) and transfers target proteins to it. Binds to nascent polypeptide chain and promotes folding in an environment in which there are many competing pathways for nonnative proteins. The protein is Prefoldin subunit 2 (PFDN2) of Homo sapiens (Human).